The sequence spans 440 residues: MSKNVVVIGTQWGDEGKGKIVDWLTDHAQGVVRFQGGHNAGHTLVIGQGASQKEYKLNLVPSGIVREGVNCYIGNGVVLDANHLLFEIDGLEKAGLEVRNRLKVSPGCPLILEYHVRLDKAREAAREPGRKIGTTGKGIGPTYEDKVARRALRVYDLFYPERFAEKLREVLDYHNFVLTKYLNAEAVDYQQQLDEALSKAPLLQPLVTDISAALYEANKAGQNLLFEGAQGTLLDVDHGTYPYVTSSNCISGQAAAGTGVGPSMLHYVLGITKAYTTRVGGGPFPSELDIETEDSPGFQMSDKGREIGTVTKRKRRCGWFDAAALRRSARINGLTGLCITKLDVLDGIKELNICTGYELDGKPVDLLPVGADDVARCQPVYETLPGWDESTFGISRWEDLPQNARNYLKRLEALCEVPVDIVSTGPERDETIVLRHPFGA.

GTP is bound by residues 13–19 and 41–43; these read GDEGKGK and GHT. Asp14 functions as the Proton acceptor in the catalytic mechanism. Mg(2+)-binding residues include Asp14 and Gly41. IMP is bound by residues 14-17, 39-42, Thr135, Arg149, Gln230, Thr245, and Arg313; these read DEGK and NAGH. The active-site Proton donor is His42. 309-315 lines the substrate pocket; it reads TVTKRKR. GTP contacts are provided by residues Arg315, 341-343, and 423-425; these read KLD and STG.

The protein belongs to the adenylosuccinate synthetase family. Homodimer. It depends on Mg(2+) as a cofactor.

The protein localises to the cytoplasm. The catalysed reaction is IMP + L-aspartate + GTP = N(6)-(1,2-dicarboxyethyl)-AMP + GDP + phosphate + 2 H(+). It participates in purine metabolism; AMP biosynthesis via de novo pathway; AMP from IMP: step 1/2. Its function is as follows. Plays an important role in the de novo pathway of purine nucleotide biosynthesis. Catalyzes the first committed step in the biosynthesis of AMP from IMP. The polypeptide is Adenylosuccinate synthetase (Methylobacillus flagellatus (strain ATCC 51484 / DSM 6875 / VKM B-1610 / KT)).